A 370-amino-acid polypeptide reads, in one-letter code: Probable G-protein coupled receptor 85 (370 aa).

The Extracellular portion of the chain corresponds to methionine 1 to threonine 25. Residue asparagine 3 is glycosylated (N-linked (GlcNAc...) asparagine). A helical membrane pass occupies residues serine 26–alanine 46. Residues lysine 47–tyrosine 57 are Cytoplasmic-facing. Residues phenylalanine 58–phenylalanine 78 traverse the membrane as a helical segment. The Extracellular portion of the chain corresponds to asparagine 79–valine 96. Residue asparagine 83 is glycosylated (N-linked (GlcNAc...) asparagine). Cysteine 94 and cysteine 172 are disulfide-bonded. The chain crosses the membrane as a helical span at residues isoleucine 97–valine 117. Residues threonine 118–threonine 137 are Cytoplasmic-facing. Residues cysteine 138–leucine 158 form a helical membrane-spanning segment. Topologically, residues aspartate 159 to methionine 188 are extracellular. N-linked (GlcNAc...) asparagine glycosylation is present at asparagine 182. Residues leucine 189–valine 209 traverse the membrane as a helical segment. Topologically, residues histidine 210–methionine 286 are cytoplasmic. Residues phenylalanine 287–tryptophan 307 traverse the membrane as a helical segment. Topologically, residues arginine 308–glycine 313 are extracellular. The chain crosses the membrane as a helical span at residues proline 314 to isoleucine 334. Over asparagine 335–isoleucine 370 the chain is Cytoplasmic.

Belongs to the G-protein coupled receptor 1 family. In terms of assembly, interacts with DLG4 and DLG3.

It localises to the cell membrane. The protein localises to the endoplasmic reticulum. In terms of biological role, orphan receptor. The sequence is that of Probable G-protein coupled receptor 85 (GPR85) from Pongo abelii (Sumatran orangutan).